A 209-amino-acid chain; its full sequence is Ribosomal RNA large subunit methyltransferase E (209 aa).

S-adenosyl-L-methionine contacts are provided by G63, W65, D83, D99, and D124. K164 functions as the Proton acceptor in the catalytic mechanism.

This sequence belongs to the class I-like SAM-binding methyltransferase superfamily. RNA methyltransferase RlmE family.

The protein resides in the cytoplasm. It carries out the reaction uridine(2552) in 23S rRNA + S-adenosyl-L-methionine = 2'-O-methyluridine(2552) in 23S rRNA + S-adenosyl-L-homocysteine + H(+). Specifically methylates the uridine in position 2552 of 23S rRNA at the 2'-O position of the ribose in the fully assembled 50S ribosomal subunit. This Shewanella sp. (strain ANA-3) protein is Ribosomal RNA large subunit methyltransferase E.